A 180-amino-acid chain; its full sequence is NADH-quinone oxidoreductase subunit I (180 aa).

4Fe-4S ferredoxin-type domains lie at 46–80 (GRIV…LQKT) and 90–119 (EFFR…LTPD). Cys60, Cys63, Cys66, Cys70, Cys99, Cys102, Cys105, and Cys109 together coordinate [4Fe-4S] cluster.

Belongs to the complex I 23 kDa subunit family. As to quaternary structure, NDH-1 is composed of 14 different subunits. Subunits NuoA, H, J, K, L, M, N constitute the membrane sector of the complex. [4Fe-4S] cluster serves as cofactor.

The protein localises to the cell membrane. The catalysed reaction is a quinone + NADH + 5 H(+)(in) = a quinol + NAD(+) + 4 H(+)(out). In terms of biological role, NDH-1 shuttles electrons from NADH, via FMN and iron-sulfur (Fe-S) centers, to quinones in the respiratory chain. The immediate electron acceptor for the enzyme in this species is believed to be ubiquinone. Couples the redox reaction to proton translocation (for every two electrons transferred, four hydrogen ions are translocated across the cytoplasmic membrane), and thus conserves the redox energy in a proton gradient. This Baumannia cicadellinicola subsp. Homalodisca coagulata protein is NADH-quinone oxidoreductase subunit I.